Consider the following 603-residue polypeptide: Growth-regulating factor 6 (603 aa).

The disordered stretch occupies residues 34–58; the sequence is KHGRGNAGDQEHEWRPPAKQARGGD. The QLQ domain occupies 158–193; it reads PFTPSQWIELEHQALIYKYLAANSPVPHSLLIPIRR. Residues 223-267 enclose the WRC domain; the sequence is DPEPGRCRRTDGKKWRCSRDAVADQKYCERHMNRGRHRSRKHVEG. 2 short sequence motifs (bipartite nuclear localization signal) span residues 228-238 and 256-263; these read RCRRTDGKKWR and RGRHRSRK. The segment covering 561-571 has biased composition (low complexity); the sequence is FGSVSSSTGSS. A disordered region spans residues 561–582; sequence FGSVSSSTGSSPRLENHSVYDG.

The protein belongs to the GRF family.

Its subcellular location is the nucleus. Its function is as follows. Transcription activator that plays a regulatory role in gibberellin-induced stem elongation. This Oryza sativa subsp. japonica (Rice) protein is Growth-regulating factor 6 (GRF6).